The following is a 390-amino-acid chain: DNA polymerase IV (390 aa).

One can recognise a UmuC domain in the interval 6–187; the sequence is VMHVDLDAFF…LDISIMPGIG (182 aa). Residues D10 and D105 each contribute to the Mg(2+) site. The active site involves E106.

This sequence belongs to the DNA polymerase type-Y family. In terms of assembly, monomer. Requires Mg(2+) as cofactor.

The protein localises to the cytoplasm. It carries out the reaction DNA(n) + a 2'-deoxyribonucleoside 5'-triphosphate = DNA(n+1) + diphosphate. Functionally, poorly processive, error-prone DNA polymerase involved in untargeted mutagenesis. Copies undamaged DNA at stalled replication forks, which arise in vivo from mismatched or misaligned primer ends. These misaligned primers can be extended by PolIV. Exhibits no 3'-5' exonuclease (proofreading) activity. May be involved in translesional synthesis, in conjunction with the beta clamp from PolIII. The protein is DNA polymerase IV of Dehalococcoides mccartyi (strain ATCC BAA-2266 / KCTC 15142 / 195) (Dehalococcoides ethenogenes (strain 195)).